The following is a 312-amino-acid chain: Malate dehydrogenase (312 aa).

NAD(+) contacts are provided by residues 7 to 13 (GAAGGIG) and Asp-34. Residues Arg-81 and Arg-87 each contribute to the substrate site. Residues Asn-94 and 117 to 119 (ITN) contribute to the NAD(+) site. Asn-119 and Arg-153 together coordinate substrate. His-177 serves as the catalytic Proton acceptor. Residue Met-227 participates in NAD(+) binding.

The protein belongs to the LDH/MDH superfamily. MDH type 1 family. As to quaternary structure, homodimer.

It catalyses the reaction (S)-malate + NAD(+) = oxaloacetate + NADH + H(+). Its function is as follows. Catalyzes the reversible oxidation of malate to oxaloacetate. In Serratia proteamaculans (strain 568), this protein is Malate dehydrogenase.